We begin with the raw amino-acid sequence, 300 residues long: Porphobilinogen deaminase (300 aa).

Cys-241 is subject to S-(dipyrrolylmethanemethyl)cysteine.

Belongs to the HMBS family. As to quaternary structure, monomer. Requires dipyrromethane as cofactor.

It carries out the reaction 4 porphobilinogen + H2O = hydroxymethylbilane + 4 NH4(+). The protein operates within porphyrin-containing compound metabolism; protoporphyrin-IX biosynthesis; coproporphyrinogen-III from 5-aminolevulinate: step 2/4. Its function is as follows. Tetrapolymerization of the monopyrrole PBG into the hydroxymethylbilane pre-uroporphyrinogen in several discrete steps. The chain is Porphobilinogen deaminase from Sorangium cellulosum (strain So ce56) (Polyangium cellulosum (strain So ce56)).